We begin with the raw amino-acid sequence, 112 residues long: M-myrmeciitoxin-Mp1 (112 aa).

Residues 1–26 form the signal peptide; the sequence is MKLSCLLLTLTIIFVLTIVHAPNVEA. A propeptide spanning residues 27 to 56 is cleaved from the precursor; that stretch reads KDLADPESEAVGFADAFGEADAVGEADPNA. The tract at residues 57–78 is critical for cytotoxic activity; the sequence is GLGSVFGRLARILGRVIPKVAK. The interval 93-106 is igE-binding determinant; that stretch reads KEAIPMAVEMAKSQ.

It belongs to the formicidae venom precursor-01 superfamily. Ant pilosulin family. As to expression, expressed by the venom gland.

It is found in the secreted. Has strong cytotoxic and hemolytic activities. Is more potent against mononuclear leukocytes than against granulocytes. The synthesized peptide 57-76 shows a potent and broad spectrum antimicrobial activity against both Gram-positive and Gram-negative bacteria, and also against the fungus C.albicans. Adopts an alpha-helical structure. This is M-myrmeciitoxin-Mp1 from Myrmecia pilosula (Jack jumper ant).